A 1020-amino-acid polypeptide reads, in one-letter code: Sodium/potassium-transporting ATPase subunit alpha-2 (1020 aa).

Residues 1–5 (MGRGA) constitute a propeptide that is removed on maturation. A disordered region spans residues 1–31 (MGRGAGREYSPAATTAENGGGKKKQKEKELD). Residues 6–85 (GREYSPAATT…NALTPPPTTP (80 aa)) lie on the Cytoplasmic side of the membrane. Position 10 is a phosphoserine (Ser10). Positions 80 to 82 (PPP) are interaction with phosphoinositide-3 kinase. Residues 86 to 106 (EWVKFCRQLFGGFSILLWIGA) traverse the membrane as a helical segment. Topologically, residues 107–129 (ILCFLAFGIQAAMEDEPSNDNLY) are extracellular. Residues 130–150 (LGVVLAAVVIVTGCFSYYQEA) traverse the membrane as a helical segment. Residues 151–286 (KSSKIMDSFK…VGRTPIAMEI (136 aa)) are Cytoplasmic-facing. Residues 212–227 (DNSSLTGESEPQTRSP) are compositionally biased toward polar residues. Residues 212–231 (DNSSLTGESEPQTRSPEFTH) are disordered. Residues 287–306 (EHFIQLITGVAVFLGVSFFV) form a helical membrane-spanning segment. The Extracellular portion of the chain corresponds to 307–318 (LSLILGYSWLEA). A helical membrane pass occupies residues 319-336 (VIFLIGIIVANVPEGLLA). The Cytoplasmic segment spans residues 337–769 (TVTVCLTLTA…EEGRLIFDNL (433 aa)). Residue Asp374 is the 4-aspartylphosphate intermediate of the active site. Phosphoserine is present on residues Ser439, Ser450, Ser496, and Ser559. Thr570 carries the phosphothreonine modification. Phosphoserine occurs at positions 587 and 672. Mg(2+) is bound by residues Asp714 and Asp718. A helical transmembrane segment spans residues 770–789 (KKSIAYTLTSNIPEITPFLL). At 790–799 (FIIANIPLPL) the chain is on the extracellular side. A helical membrane pass occupies residues 800 to 820 (GTVTILCIDLGTDMVPAISLA). Residues 821–840 (YEAAESDIMKRQPRNPQTDK) are Cytoplasmic-facing. The residue at position 826 (Ser826) is a Phosphoserine. Residues 841–863 (LVNERLISMAYGQIGMIQALGGF) form a helical membrane-spanning segment. Residues 864–915 (FTYFVILAENGFLPSRLLGIRLDWDDRSMNDLEDSYGQEWTYEQRKVVEFTC) are Extracellular-facing. The helical transmembrane segment at 916 to 935 (HTAFFASIVVVQWADLIICK) threads the bilayer. Over 936-948 (TRRNSVFQQGMKN) the chain is Cytoplasmic. The residue at position 940 (Ser940) is a Phosphoserine; by PKA. A helical membrane pass occupies residues 949 to 967 (KILIFGLLEETALAAFLSY). Over 968-982 (CPGMGVALRMYPLKV) the chain is Extracellular. A helical transmembrane segment spans residues 983 to 1003 (TWWFCAFPYSLLIFIYDEVRK). At 1004 to 1020 (LILRRYPGGWVEKETYY) the chain is on the cytoplasmic side.

It belongs to the cation transport ATPase (P-type) (TC 3.A.3) family. Type IIC subfamily. As to quaternary structure, the sodium/potassium-transporting ATPase is composed of a catalytic alpha subunit, an auxiliary non-catalytic beta subunit and an additional regulatory subunit. Interacts with regulatory subunit FXYD1.

Its subcellular location is the membrane. The protein localises to the cell membrane. It catalyses the reaction K(+)(out) + Na(+)(in) + ATP + H2O = K(+)(in) + Na(+)(out) + ADP + phosphate + H(+). In terms of biological role, this is the catalytic component of the active enzyme, which catalyzes the hydrolysis of ATP coupled with the exchange of sodium and potassium ions across the plasma membrane. This action creates the electrochemical gradient of sodium and potassium, providing the energy for active transport of various nutrients. The polypeptide is Sodium/potassium-transporting ATPase subunit alpha-2 (ATP1A2) (Bos taurus (Bovine)).